Here is a 645-residue protein sequence, read N- to C-terminus: UvrABC system protein C (645 aa).

The tract at residues Met1–Val20 is disordered. The GIY-YIG domain maps to Tyr40 to Ile118. One can recognise a UVR domain in the interval Thr228–Ile263.

It belongs to the UvrC family. In terms of assembly, interacts with UvrB in an incision complex.

The protein resides in the cytoplasm. Functionally, the UvrABC repair system catalyzes the recognition and processing of DNA lesions. UvrC both incises the 5' and 3' sides of the lesion. The N-terminal half is responsible for the 3' incision and the C-terminal half is responsible for the 5' incision. This chain is UvrABC system protein C, found in Gluconobacter oxydans (strain 621H) (Gluconobacter suboxydans).